The primary structure comprises 192 residues: Fe/S biogenesis protein NfuA (192 aa).

Residues cysteine 150 and cysteine 153 each contribute to the [4Fe-4S] cluster site.

It belongs to the NfuA family. As to quaternary structure, homodimer. Requires [4Fe-4S] cluster as cofactor.

Involved in iron-sulfur cluster biogenesis. Binds a 4Fe-4S cluster, can transfer this cluster to apoproteins, and thereby intervenes in the maturation of Fe/S proteins. Could also act as a scaffold/chaperone for damaged Fe/S proteins. The protein is Fe/S biogenesis protein NfuA of Buchnera aphidicola subsp. Acyrthosiphon pisum (strain 5A).